We begin with the raw amino-acid sequence, 860 residues long: Pentatricopeptide repeat-containing protein At1g18900 (860 aa).

PPR repeat units follow at residues 363–397 (DGHT…GCQP), 398–432 (NTVT…GCKP), 433–467 (DRVT…GLSP), 468–502 (DTFT…GCTP), 503–537 (NLVT…GFEP), 538–572 (DKVT…NWIP), 573–607 (DEPV…GLRP), and 608–642 (NVPT…GLRP). The Smr domain occupies 760 to 843 (INLHVMSEGT…NSGCFVGSGE (84 aa)).

The protein belongs to the PPR family. P subfamily.

In Arabidopsis thaliana (Mouse-ear cress), this protein is Pentatricopeptide repeat-containing protein At1g18900.